We begin with the raw amino-acid sequence, 66 residues long: Beta-toxin Cll1m (66 aa).

In terms of domain architecture, LCN-type CS-alpha/beta spans 1-66 (KEGYIVNLST…VWPLPKKTCT (66 aa)). Disulfide bonds link cysteine 12–cysteine 65, cysteine 16–cysteine 41, cysteine 25–cysteine 46, and cysteine 29–cysteine 48. A Threonine amide modification is found at threonine 66.

The protein belongs to the long (4 C-C) scorpion toxin superfamily. Sodium channel inhibitor family. Beta subfamily. As to expression, expressed by the venom gland.

Its subcellular location is the secreted. Its function is as follows. Beta toxins bind voltage-independently at site-4 of sodium channels (Nav) and shift the voltage of activation toward more negative potentials thereby affecting sodium channel activation and promoting spontaneous and repetitive firing. The chain is Beta-toxin Cll1m from Centruroides limpidus (Mexican scorpion).